The sequence spans 433 residues: Serine--tRNA ligase (433 aa).

235 to 237 (TSE) contacts L-serine. 266–268 (RSE) serves as a coordination point for ATP. Glu289 provides a ligand contact to L-serine. 353 to 356 (EISS) is an ATP binding site. L-serine is bound at residue Ser388.

Belongs to the class-II aminoacyl-tRNA synthetase family. Type-1 seryl-tRNA synthetase subfamily. As to quaternary structure, homodimer. The tRNA molecule binds across the dimer.

The protein resides in the cytoplasm. It catalyses the reaction tRNA(Ser) + L-serine + ATP = L-seryl-tRNA(Ser) + AMP + diphosphate + H(+). It carries out the reaction tRNA(Sec) + L-serine + ATP = L-seryl-tRNA(Sec) + AMP + diphosphate + H(+). Its pathway is aminoacyl-tRNA biosynthesis; selenocysteinyl-tRNA(Sec) biosynthesis; L-seryl-tRNA(Sec) from L-serine and tRNA(Sec): step 1/1. Functionally, catalyzes the attachment of serine to tRNA(Ser). Is also able to aminoacylate tRNA(Sec) with serine, to form the misacylated tRNA L-seryl-tRNA(Sec), which will be further converted into selenocysteinyl-tRNA(Sec). In Burkholderia cenocepacia (strain ATCC BAA-245 / DSM 16553 / LMG 16656 / NCTC 13227 / J2315 / CF5610) (Burkholderia cepacia (strain J2315)), this protein is Serine--tRNA ligase.